The primary structure comprises 789 residues: ATP-dependent 6-phosphofructokinase (789 aa).

Residues 1–404 form an N-terminal catalytic PFK domain 1 region; sequence MSLKRNIRRL…NLETYKLLTK (404 aa). Residues glycine 41, 104–105, and 134–137 each bind ATP; these read RC and GDGS. Aspartate 135 lines the Mg(2+) pocket. Residues 180 to 182, arginine 217, 224 to 226, glutamate 280, arginine 307, and 313 to 316 contribute to the substrate site; these read SID, MGR, and HVQR. Aspartate 182 (proton acceptor) is an active-site residue. Residues 405–419 are interdomain linker; the sequence is LRTVEKDNLSGGQNF. The C-terminal regulatory PFK domain 2 stretch occupies residues 420-789; the sequence is NVAVMNVGAP…EAMEDTEDYD (370 aa). Beta-D-fructose 2,6-bisphosphate contacts are provided by residues lysine 489, 547–551, arginine 585, 592–594, glutamate 647, arginine 673, 679–682, and arginine 753; these read TISNN, MGG, and HAQQ.

It belongs to the phosphofructokinase type A (PFKA) family. ATP-dependent PFK group I subfamily. Eukaryotic two domain clade 'E' sub-subfamily. In terms of assembly, homotetramer. Mg(2+) serves as cofactor.

It is found in the cytoplasm. It carries out the reaction beta-D-fructose 6-phosphate + ATP = beta-D-fructose 1,6-bisphosphate + ADP + H(+). It participates in carbohydrate degradation; glycolysis; D-glyceraldehyde 3-phosphate and glycerone phosphate from D-glucose: step 3/4. With respect to regulation, allosterically activated by ADP, AMP, or fructose 2,6-bisphosphate, and allosterically inhibited by ATP or citrate. Catalyzes the phosphorylation of D-fructose 6-phosphate to fructose 1,6-bisphosphate by ATP, the first committing step of glycolysis. In Haemonchus contortus (Barber pole worm), this protein is ATP-dependent 6-phosphofructokinase (PFK).